Here is a 404-residue protein sequence, read N- to C-terminus: Glucose-1-phosphate adenylyltransferase (404 aa).

Alpha-D-glucose 1-phosphate contacts are provided by residues Tyr-99, Gly-164, 179–180, and Ser-197; that span reads EK.

This sequence belongs to the bacterial/plant glucose-1-phosphate adenylyltransferase family.

The enzyme catalyses alpha-D-glucose 1-phosphate + ATP + H(+) = ADP-alpha-D-glucose + diphosphate. It functions in the pathway capsule biogenesis; capsule polysaccharide biosynthesis. Its pathway is glycan biosynthesis; glycogen biosynthesis. Involved in the biosynthesis of ADP-glucose, a building block, required in the biosynthesis of maltose-1-phosphate (M1P) and in the elongation reactions to produce linear alpha-1,4-glucans. Catalyzes the reaction between ATP and alpha-D-glucose 1-phosphate (G1P) to produce pyrophosphate and ADP-Glc. The sequence is that of Glucose-1-phosphate adenylyltransferase from Mycobacterium ulcerans (strain Agy99).